Consider the following 909-residue polypeptide: Protein translocase subunit SecA (909 aa).

Residues Gln87 and 105–109 (GEGKT) each bind ATP. The interval 246-265 (LEQQEKEDEEGKNGDGDYTI) is disordered. The segment covering 254–265 (EEGKNGDGDYTI) has biased composition (basic and acidic residues). Residue Asp512 participates in ATP binding. Positions 834–858 (ESDVEAVEEQRRQADEQPKQYEHET) are enriched in basic and acidic residues. The tract at residues 834 to 899 (ESDVEAVEEQ…NDPCPCGSGL (66 aa)) is disordered. Residues 859–875 (ASATQAPEQAPEAAPAA) show a composition bias toward low complexity. Zn(2+) is bound by residues Cys893, Cys895, Cys904, and His905.

Belongs to the SecA family. Monomer and homodimer. Part of the essential Sec protein translocation apparatus which comprises SecA, SecYEG and auxiliary proteins SecDF-YajC and YidC. Requires Zn(2+) as cofactor.

Its subcellular location is the cell inner membrane. It is found in the cytoplasm. The enzyme catalyses ATP + H2O + cellular proteinSide 1 = ADP + phosphate + cellular proteinSide 2.. Its function is as follows. Part of the Sec protein translocase complex. Interacts with the SecYEG preprotein conducting channel. Has a central role in coupling the hydrolysis of ATP to the transfer of proteins into and across the cell membrane, serving both as a receptor for the preprotein-SecB complex and as an ATP-driven molecular motor driving the stepwise translocation of polypeptide chains across the membrane. The sequence is that of Protein translocase subunit SecA from Pseudoalteromonas atlantica (strain T6c / ATCC BAA-1087).